Here is a 409-residue protein sequence, read N- to C-terminus: Phosphatidylserine decarboxylase proenzyme, mitochondrial (409 aa).

The transit peptide at 1–52 (MAASVCRPYVRSLPGVMPWRSSSCHYEYTAMHHFLGSFQKLPFEPFNTGARK) directs the protein to the mitochondrion. The Mitochondrial matrix portion of the chain corresponds to 53–63 (IHTAPVRSLFL). A helical membrane pass occupies residues 64–82 (LRPVPILLATGGGYAGYRQ). Over 83 to 409 (YEKYRDQKLE…IRFGEALGSL (327 aa)) the chain is Mitochondrial intermembrane. Catalysis depends on charge relay system; for autoendoproteolytic cleavage activity residues Asp-191, His-267, and Ser-378. The active-site Schiff-base intermediate with substrate; via pyruvic acid; for decarboxylase activity is Ser-378. At Ser-378 the chain carries Pyruvic acid (Ser); by autocatalysis.

This sequence belongs to the phosphatidylserine decarboxylase family. PSD-B subfamily. Eukaryotic type I sub-subfamily. Heterodimer of a large membrane-associated beta subunit and a small pyruvoyl-containing alpha subunit. Pyruvate is required as a cofactor. Post-translationally, is synthesized initially as an inactive proenzyme. Formation of the active enzyme involves a self-maturation process in which the active site pyruvoyl group is generated from an internal serine residue via an autocatalytic post-translational modification. Two non-identical subunits are generated from the proenzyme in this reaction, and the pyruvate is formed at the N-terminus of the alpha chain, which is derived from the carboxyl end of the proenzyme. The autoendoproteolytic cleavage occurs by a canonical serine protease mechanism, in which the side chain hydroxyl group of the serine supplies its oxygen atom to form the C-terminus of the beta chain, while the remainder of the serine residue undergoes an oxidative deamination to produce ammonia and the pyruvoyl prosthetic group on the alpha chain. During this reaction, the Ser that is part of the protease active site of the proenzyme becomes the pyruvoyl prosthetic group, which constitutes an essential element of the active site of the mature decarboxylase.

The protein resides in the mitochondrion inner membrane. The protein localises to the cytoplasm. It localises to the lipid droplet. The enzyme catalyses a 1,2-diacyl-sn-glycero-3-phospho-L-serine + H(+) = a 1,2-diacyl-sn-glycero-3-phosphoethanolamine + CO2. It participates in phospholipid metabolism; phosphatidylethanolamine biosynthesis. Catalyzes the formation of phosphatidylethanolamine (PtdEtn) from phosphatidylserine (PtdSer). Plays a central role in phospholipid metabolism and in the interorganelle trafficking of phosphatidylserine. May be involved in lipid droplet biogenesis at the endoplasmic reticulum membrane. This chain is Phosphatidylserine decarboxylase proenzyme, mitochondrial, found in Cricetulus griseus (Chinese hamster).